A 336-amino-acid chain; its full sequence is Fructose-1,6-bisphosphatase class 2 (336 aa).

Residues Asp-33, Glu-57, Asp-85, and Glu-88 each coordinate Mn(2+). Residues 88 to 90 (EGT), Tyr-119, 164 to 166 (KPR), 186 to 188 (DGD), and Gly-210 each bind substrate. Glu-213 contributes to the Mn(2+) binding site.

Belongs to the FBPase class 2 family. As to quaternary structure, homodimer. Mn(2+) is required as a cofactor.

It is found in the cytoplasm. It catalyses the reaction beta-D-fructose 1,6-bisphosphate + H2O = beta-D-fructose 6-phosphate + phosphate. It functions in the pathway carbohydrate biosynthesis; gluconeogenesis. In terms of biological role, catalyzes the hydrolysis of fructose 1,6-bisphosphate to fructose 6-phosphate. The sequence is that of Fructose-1,6-bisphosphatase class 2 (glpX) from Shigella flexneri.